A 512-amino-acid polypeptide reads, in one-letter code: Ferredoxin--nitrite reductase (512 aa).

The [4Fe-4S] cluster site is built by Cys396, Cys402, Cys437, and Cys441. Siroheme is bound at residue Cys441.

The protein belongs to the nitrite and sulfite reductase 4Fe-4S domain family.

The catalysed reaction is 6 oxidized [2Fe-2S]-[ferredoxin] + NH4(+) + 2 H2O = nitrite + 6 reduced [2Fe-2S]-[ferredoxin] + 8 H(+). The chain is Ferredoxin--nitrite reductase (nirA) from Synechococcus elongatus (strain ATCC 33912 / PCC 7942 / FACHB-805) (Anacystis nidulans R2).